Consider the following 153-residue polypeptide: Catabolic 3-dehydroquinase (153 aa).

Catalysis depends on Y24, which acts as the Proton acceptor. 3 residues coordinate substrate: N75, H81, and D88. The active-site Proton donor is H101. Substrate contacts are provided by residues 102-103 (VS) and R112.

It belongs to the type-II 3-dehydroquinase family. In terms of assembly, homododecamer. Adopts a ring-like structure, composed of an arrangement of two hexameric rings stacked on top of one another.

It catalyses the reaction 3-dehydroquinate = 3-dehydroshikimate + H2O. The protein operates within aromatic compound metabolism; 3,4-dihydroxybenzoate biosynthesis; 3,4-dihydroxybenzoate from 3-dehydroquinate: step 1/2. In terms of biological role, is involved in the catabolism of quinate. Allows the utilization of quinate as carbon source via the beta-ketoadipate pathway. This chain is Catabolic 3-dehydroquinase, found in Aspergillus oryzae (strain ATCC 42149 / RIB 40) (Yellow koji mold).